Here is a 133-residue protein sequence, read N- to C-terminus: Bacteriohemerythrin (133 aa).

Residues His19, His56, Glu60, His75, His79, His115, and Asp120 each coordinate Fe cation.

It belongs to the hemerythrin family. In terms of assembly, monomer.

In terms of biological role, oxygen-binding protein. May be involved in a storage mechanism or for delivery to oxygen-requiring enzymes. The oxygen-binding site contains two iron atoms. The chain is Bacteriohemerythrin from Campylobacter jejuni subsp. jejuni serotype O:23/36 (strain 81-176).